The primary structure comprises 205 residues: Large ribosomal subunit protein uL18 (205 aa).

It belongs to the universal ribosomal protein uL18 family. As to quaternary structure, part of the 50S ribosomal subunit. Contacts the 5S and 23S rRNAs.

This is one of the proteins that bind and probably mediate the attachment of the 5S RNA into the large ribosomal subunit, where it forms part of the central protuberance. This Pyrobaculum aerophilum (strain ATCC 51768 / DSM 7523 / JCM 9630 / CIP 104966 / NBRC 100827 / IM2) protein is Large ribosomal subunit protein uL18.